Consider the following 254-residue polypeptide: Photosystem II 22 kDa protein 2, chloroplastic (254 aa).

The N-terminal 38 residues, 1–38, are a transit peptide targeting the chloroplast; it reads MALQQSMAMPMMVVSDLGTAPRSSPMVQLQRMKKHLVV. Repeat copies occupy residues 42–148 and 149–253. 4 consecutive transmembrane segments (helical) span residues 86–106, 120–140, 184–204, and 219–239; these read VAMLGFAASLLGEAVTGKGIL, AEPLLLFFILFTLLGAIGALG, LFVGRLAQLGIAFSLIGEIIT, and PINEIEPLLLFNILFFFFAAI.

This sequence belongs to the ELIP/psbS family.

The protein resides in the plastid. Its subcellular location is the chloroplast thylakoid membrane. In terms of biological role, involved in high light-mediated energy-dependent nonphotochemical quenching (NPQ, qE) and thermal dissipation (TD) thus regulating energy conversion in photosystem II and protecting from photoinhibition. Also seems to regulate quantum yield of electron transport in fluctuating light conditions. The protein is Photosystem II 22 kDa protein 2, chloroplastic of Oryza sativa subsp. japonica (Rice).